The chain runs to 890 residues: Wolframin (890 aa).

Met1 bears the N-acetylmethionine mark. The segment at 1-86 (MDSNTAPLGP…TGPTKGDMEI (86 aa)) is disordered. The interval 1–321 (MDSNTAPLGP…MHWLSTIIPT (321 aa)) is interaction with ATP6V1A. Residues 10–20 (PSCPQPPPAPQ) are compositionally biased toward pro residues. At Thr30 the chain carries Phosphothreonine; by FAM20C. The residue at position 32 (Ser32) is a Phosphoserine; by FAM20C. At Ser157 the chain carries Phosphoserine. 10 helical membrane passes run 314–334 (WLST…FIVS), 340–360 (FFAF…MVIC), 402–422 (LEPY…FPIA), 427–447 (IPCS…YLSL), 465–485 (AGLL…KVLG), 496–516 (LVVL…YLFF), 529–549 (CYLV…VILL), 563–583 (YFLF…VGVL), 589–609 (FTSL…VPLL), and 632–652 (MVKL…FYVY). The Lumenal portion of the chain corresponds to 653–869 (RSEGMKVYNS…HVKIEHDWRS (217 aa)). Residues Asn661 and Asn746 are each glycosylated (N-linked (GlcNAc...) asparagine). Residues 870–890 (TVHGAVKFAFDFFFFPFLSAA) form a helical membrane-spanning segment.

In terms of assembly, interacts with ATP6V1A. As to expression, highly expressed in heart followed by brain, placenta, lung and pancreas. Weakly expressed in liver, kidney and skeletal muscle. Also expressed in islet and beta-cell insulinoma cell line.

It localises to the endoplasmic reticulum membrane. The protein localises to the cytoplasmic vesicle. It is found in the secretory vesicle. Participates in the regulation of cellular Ca(2+) homeostasis, at least partly, by modulating the filling state of the endoplasmic reticulum Ca(2+) store. Negatively regulates the ER stress response and positively regulates the stability of V-ATPase subunits ATP6V1A and ATP1B1 by preventing their degradation through an unknown proteasome-independent mechanism. This is Wolframin (WFS1) from Homo sapiens (Human).